The sequence spans 1108 residues: Retinal guanylyl cyclase 2 (1108 aa).

An N-terminal signal peptide occupies residues 1–50; it reads MFLGPWPFSRLLSWFAISSRLSGQHGLTSSKFLRYLCLLALLPLIWWGQA. Topologically, residues 51 to 465 are extracellular; sequence LPYKIGVIGP…QGKICQGGID (415 aa). An intrachain disulfide couples C104 to C132. Residues 466–490 form a helical membrane-spanning segment; it reads PALAMMVCFALLLALLSINGFAYFI. Residues 491–1108 lie on the Cytoplasmic side of the membrane; the sequence is RRRINKIQLI…AERQLVRNKP (618 aa). Residues 532-812 form the Protein kinase domain; the sequence is FQIISEVQSG…DEIFNQFKTF (281 aa). The Guanylate cyclase domain maps to 884–1014; that stretch reads TLYFSDIVGF…DTVNTASRME (131 aa).

Belongs to the adenylyl cyclase class-4/guanylyl cyclase family. Homodimer. Interacts with RD3; promotes the exit of GUCY2F from the endoplasmic reticulum and its trafficking to the photoreceptor outer segments. In terms of processing, there are 9 conserved cysteine residues in sensory guanylate cyclases, 6 in the extracellular domain, which may be involved in intra- or interchain disulfide bonds. Expressed only in the eye.

Its subcellular location is the membrane. The protein resides in the photoreceptor outer segment membrane. It catalyses the reaction GTP = 3',5'-cyclic GMP + diphosphate. Its activity is regulated as follows. Activated by GUCA1B when free calcium ions concentration is low, and inhibited by GUCA1B when free calcium ions concentration is high. Inhibited by RD3. In terms of biological role, responsible for the synthesis of cyclic GMP (cGMP) in rods and cones of photoreceptors. Plays an essential role in phototransduction, by mediating cGMP replenishment. May also participate in the trafficking of membrane-asociated proteins to the photoreceptor outer segment membrane. This Rattus norvegicus (Rat) protein is Retinal guanylyl cyclase 2 (Gucy2f).